Consider the following 91-residue polypeptide: Putative regulatory protein Cphy_2880 (91 aa).

It belongs to the RemA family.

This is Putative regulatory protein Cphy_2880 from Lachnoclostridium phytofermentans (strain ATCC 700394 / DSM 18823 / ISDg) (Clostridium phytofermentans).